The chain runs to 513 residues: Sucrose transport protein SUC1 (513 aa).

Positions 1 to 11 are enriched in basic and acidic residues; that stretch reads MGAYETEKPTK. The interval 1–26 is disordered; the sequence is MGAYETEKPTKDAAALETQSPEDFDQ. Topologically, residues 1-32 are cytoplasmic; that stretch reads MGAYETEKPTKDAAALETQSPEDFDQPSPLRK. Position 20 is a phosphoserine (Ser20). The chain crosses the membrane as a helical span at residues 33-53; the sequence is IISVASIAAGVQFGWALQLSL. Residues 54-67 are Extracellular-facing; the sequence is LTPYVQLLGIPHKW. A helical transmembrane segment spans residues 68 to 88; that stretch reads SSLIWLCGPVSGMIVQPIVGF. Residues 89–101 are Cytoplasmic-facing; that stretch reads HSDRCRSKFGRRR. Residues 102 to 122 traverse the membrane as a helical segment; it reads PFIATGAALVAVAVFLIGYAA. The Extracellular segment spans residues 123–139; that stretch reads DFGYKMGDKLEEKVKVR. The helical transmembrane segment at 140 to 160 threads the bilayer; that stretch reads AIGIFALGFWILDVANNTLQG. Topologically, residues 161–178 are cytoplasmic; sequence PCRAFLADLAAGDAKRTR. A helical transmembrane segment spans residues 179-199; that stretch reads VANAFFSFFMAVGNVLGYAAG. Topologically, residues 200-224 are extracellular; it reads SYTNLHKMFPFTMTKACDIYCANLK. A helical membrane pass occupies residues 225-245; sequence TCFFLSITLLLIVTVTSLWYV. Residues 246–282 lie on the Cytoplasmic side of the membrane; it reads NDKQWSPPPRNADDDEKTSSVPLFGEIFGAFKVMKRP. A helical membrane pass occupies residues 283-303; sequence MWMLLIVTALNWIAWFPFLLF. The Extracellular segment spans residues 304 to 334; sequence DTDWMGREVFGGDSDGNERSKKLYSLGVQSG. Residues 335 to 355 traverse the membrane as a helical segment; sequence AMGLMFNSIVLGFMSLGVEWI. Residues 356-365 lie on the Cytoplasmic side of the membrane; it reads GRKLGGAKRL. The helical transmembrane segment at 366–386 threads the bilayer; that stretch reads WGIVNFILAAGLAMTVLVTKF. At 387–408 the chain is on the extracellular side; sequence AEDHRKTAGDLAGPSASVKAGA. A helical transmembrane segment spans residues 409-429; it reads LSLFAVLGIPLAITFSTPFAL. The Cytoplasmic portion of the chain corresponds to 430-441; the sequence is ASIFSSCSGAGQ. The helical transmembrane segment at 442–462 threads the bilayer; the sequence is GLSLGVLNLAIVIPQMIVSLG. Residues 463–474 lie on the Extracellular side of the membrane; sequence GGPFDALFGGGN. Residues 475-495 form a helical membrane-spanning segment; that stretch reads LPAFIVAAIAAAISGVLALTV. Residues 496–513 are Cytoplasmic-facing; that stretch reads LPSPPPDAPKATTMGGFH.

The protein belongs to the glycoside-pentoside-hexuronide (GPH) cation symporter transporter (TC 2.A.2.4) family. In terms of tissue distribution, expressed in flowers (at protein level). Highly expressed in pollen. Expressed in pollen tubes and root vascular cylinder, pericycle and endodermis.

Its subcellular location is the membrane. The enzyme catalyses sucrose(out) + H(+)(out) = sucrose(in) + H(+)(in). Its pathway is glycan biosynthesis; sucrose metabolism. With respect to regulation, inhibited by DEPC, protonophores (e.g. dinitrophenol and carbonyl cyanide m-chlorophenyl-hydrazone (CCCP)), and SH group inhibitors (e.g. N-ethylmaleimide (NEM) and p-chloromercuriphenyl sulphonic acid (PCMPS)). In terms of biological role, responsible for the transport of sucrose into the cell, with the concomitant uptake of protons (symport system). This transport is both voltage- and energy-dependent. Can also transport other glucosides such as maltose, alpha-phenylglucoside and beta-phenylglucoside. May also transport biotin. Required for normal pollen germination and anthocyanin accumulation induced by sucrose. The chain is Sucrose transport protein SUC1 from Arabidopsis thaliana (Mouse-ear cress).